The chain runs to 209 residues: Small ribosomal subunit protein uS3c (209 aa).

In terms of domain architecture, KH type-2 spans 39–109 (IRSCIEKQLH…QIRINLIEIT (71 aa)).

This sequence belongs to the universal ribosomal protein uS3 family. As to quaternary structure, part of the 30S ribosomal subunit.

The protein localises to the plastid. The protein resides in the chloroplast. The protein is Small ribosomal subunit protein uS3c (rps3) of Gracilaria tenuistipitata (Red alga).